Here is a 220-residue protein sequence, read N- to C-terminus: Glutathione peroxidase (220 aa).

U64 is a catalytic residue. Position 64 (U64) is a non-standard amino acid, selenocysteine.

Belongs to the glutathione peroxidase family. During periods of oxidative stress, Sec-64 may react with a superoxide radical, irreversibly lose hydroselenide and be converted to dehydroalanine.

It catalyses the reaction 2 glutathione + H2O2 = glutathione disulfide + 2 H2O. May protect the virus and component of infected cells from oxidative damage by peroxides whose formation may be stimulated by infection. This chain is Glutathione peroxidase (GPX1), found in Homo sapiens (Human).